Consider the following 430-residue polypeptide: Tol-Pal system protein TolB (430 aa).

Residues 1-21 (MKQALRVAFGFLILWASVLHA) form the signal peptide.

This sequence belongs to the TolB family. In terms of assembly, the Tol-Pal system is composed of five core proteins: the inner membrane proteins TolA, TolQ and TolR, the periplasmic protein TolB and the outer membrane protein Pal. They form a network linking the inner and outer membranes and the peptidoglycan layer.

It localises to the periplasm. Functionally, part of the Tol-Pal system, which plays a role in outer membrane invagination during cell division and is important for maintaining outer membrane integrity. TolB occupies a key intermediary position in the Tol-Pal system because it communicates directly with both membrane-embedded components, Pal in the outer membrane and TolA in the inner membrane. This chain is Tol-Pal system protein TolB, found in Shigella boydii serotype 4 (strain Sb227).